Here is a 314-residue protein sequence, read N- to C-terminus: Fibrinogen-like protein 1 (314 aa).

The N-terminal stretch at 1-22 (MGEIRSFLLVTIALMMGREIWA) is a signal peptide. A coiled-coil region spans residues 25 to 59 (NSKCLLEQERLRAQVQQLETRVKQQQARIAQLMHE). The 233-residue stretch at 76–308 (LGGKRQYADC…SVVMKIRPND (233 aa)) folds into the Fibrinogen C-terminal domain. 2 cysteine pairs are disulfide-bonded: cysteine 85/cysteine 114 and cysteine 250/cysteine 263.

Homodimer. Interacts (via the Fibrinogen C-terminal domain) with LAG3 (via Ig-like domains 1 and 2).

It is found in the secreted. In terms of biological role, immune suppressive molecule that inhibits antigen-specific T-cell activation by acting as a major ligand of LAG3. Responsible for LAG3 T-cell inhibitory function. Binds LAG3 independently from MHC class II (MHC-II). Secreted by, and promotes growth of, hepatocytes. In Mesocricetus auratus (Golden hamster), this protein is Fibrinogen-like protein 1.